Consider the following 621-residue polypeptide: MSLDISQYPVLAQANTPDELRQLPQAVLPQLADELRGFLLKSVGKSSGHFASGLGTVELTVALHYVYNTPFDRLIWDVGHQAYPHKILTGRRDAMHTIRQKGGIHPFPWREESEYDTFSVGHSGTSISAALAMAVAAEKEQAGRKVVSVIGDGAMTGGMVFEAMNHAGDLHNDMLVVLNDNEMSISENVGALNNHLAQLMSGRFYTTIRESSKKVLKGMPVIKEMAKRTEEHLKGMVVPGTMFEELGFNYIGPIDGHDVDALVETMRNMRNLSGPQILHIMTKKGRGYEPAEKDPIGWHAVPKFDPSTFEKPASKPSNPTFSQVFGKWLCDVAEKDKKVLGITPAMREGSGMVEFSQRFPKQYFDAAIAEQHAVTLGAGFACEGLKPVVAIYSTFLQRGYDQLIHDVALQKLPVLFAIDRGGIVGADGPTHQGAFDLSFMRTVPNMVIMAPSDENECRQMLYTGYCYNDGPTAVRYPRGSATGAPQIEEMTALPIGKGLIKRQGQKVAILNFGTLLASVLTAGESLDATVADMRFVKPLDVELIKELANSHDVLVTVEENAIMGGAGSGVLELLQQLKQPMPVLQLGLPDEFIKHGDSGEIIAELKLDAAGILEQIESYLA.

Residues His80 and 121-123 (GHS) each bind thiamine diphosphate. Asp152 provides a ligand contact to Mg(2+). Thiamine diphosphate contacts are provided by residues 153–154 (GA), Asn181, Tyr288, and Glu370. Mg(2+) is bound at residue Asn181.

Belongs to the transketolase family. DXPS subfamily. As to quaternary structure, homodimer. Mg(2+) serves as cofactor. The cofactor is thiamine diphosphate.

The enzyme catalyses D-glyceraldehyde 3-phosphate + pyruvate + H(+) = 1-deoxy-D-xylulose 5-phosphate + CO2. It participates in metabolic intermediate biosynthesis; 1-deoxy-D-xylulose 5-phosphate biosynthesis; 1-deoxy-D-xylulose 5-phosphate from D-glyceraldehyde 3-phosphate and pyruvate: step 1/1. Functionally, catalyzes the acyloin condensation reaction between C atoms 2 and 3 of pyruvate and glyceraldehyde 3-phosphate to yield 1-deoxy-D-xylulose-5-phosphate (DXP). The sequence is that of 1-deoxy-D-xylulose-5-phosphate synthase from Shewanella woodyi (strain ATCC 51908 / MS32).